The following is a 192-amino-acid chain: Dihydrofolate reductase (192 aa).

The 187-residue stretch at 5–191 (NVAIIVAALK…FTYNYTLWTR (187 aa)) folds into the DHFR domain. NADP(+)-binding positions include Ala11 and 18-24 (GIGYKGK). 32 to 37 (EIRYFK) contributes to the substrate binding site. 56-58 (RKT) contacts NADP(+). Arg72 contributes to the substrate binding site. NADP(+) is bound at residue 78–80 (SRS). The substrate site is built by Ile112 and Tyr118. 113–120 (GGAEIYNE) lines the NADP(+) pocket.

This sequence belongs to the dihydrofolate reductase family.

The enzyme catalyses (6S)-5,6,7,8-tetrahydrofolate + NADP(+) = 7,8-dihydrofolate + NADPH + H(+). It participates in cofactor biosynthesis; tetrahydrofolate biosynthesis; 5,6,7,8-tetrahydrofolate from 7,8-dihydrofolate: step 1/1. In terms of biological role, key enzyme in folate metabolism. Catalyzes an essential reaction for de novo glycine and purine synthesis, and for DNA precursor synthesis. The protein is Dihydrofolate reductase (DFR1) of Candida albicans (Yeast).